The primary structure comprises 291 residues: 33 kDa chaperonin (291 aa).

2 disulfides stabilise this stretch: cysteine 229–cysteine 231 and cysteine 262–cysteine 265.

The protein belongs to the HSP33 family. Post-translationally, under oxidizing conditions two disulfide bonds are formed involving the reactive cysteines. Under reducing conditions zinc is bound to the reactive cysteines and the protein is inactive.

The protein resides in the cytoplasm. Functionally, redox regulated molecular chaperone. Protects both thermally unfolding and oxidatively damaged proteins from irreversible aggregation. Plays an important role in the bacterial defense system toward oxidative stress. The polypeptide is 33 kDa chaperonin (Vibrio parahaemolyticus serotype O3:K6 (strain RIMD 2210633)).